Reading from the N-terminus, the 202-residue chain is ATP-dependent Clp protease proteolytic subunit (202 aa).

S106 functions as the Nucleophile in the catalytic mechanism. The active site involves H131.

The protein belongs to the peptidase S14 family. In terms of assembly, fourteen ClpP subunits assemble into 2 heptameric rings which stack back to back to give a disk-like structure with a central cavity, resembling the structure of eukaryotic proteasomes.

Its subcellular location is the cytoplasm. It catalyses the reaction Hydrolysis of proteins to small peptides in the presence of ATP and magnesium. alpha-casein is the usual test substrate. In the absence of ATP, only oligopeptides shorter than five residues are hydrolyzed (such as succinyl-Leu-Tyr-|-NHMec, and Leu-Tyr-Leu-|-Tyr-Trp, in which cleavage of the -Tyr-|-Leu- and -Tyr-|-Trp bonds also occurs).. Cleaves peptides in various proteins in a process that requires ATP hydrolysis. Has a chymotrypsin-like activity. Plays a major role in the degradation of misfolded proteins. The protein is ATP-dependent Clp protease proteolytic subunit of Shewanella sp. (strain W3-18-1).